The sequence spans 860 residues: MQEQYRPEEIESKVQLHWDEKRTFEVTEDESKEKYYCLSMLPYPSGRLHMGHVRNYTIGDVVARYQRMLGKNVLQPIGWDAFGLPAEGAAVKNNTAPAPWTYDNIAYMKNQLKTLGFGYDWSREIATCTPEYYRWEQKFFTELYKKGLVYKKTSAVNWCPNDQTVLANEQVIDGCCWRCDTKVERKEIPQWFIKITAYADELLRDLDKLDHWPDTVKTMQRNWIGRSEGVEITFDVKGYDNTLTVYTTRPDTFMGATYLAVAAGHPLAQKAAANNAELAAFIDECRNTKVAEAEMATMEKKGVDTGYKAIHPLTGEEIPVWAANFVLMEYGTGAVMAVPGHDQRDYEFASKYGLTIKPVILAADGSEPDLSEQALTEKGVLFNSGEFDGLAFEAAFNAIADKLAEKGVGERKVNYRLRDWGVSRQRYWGAPIPMVTLEDGTVLPTPEDQLPVILPEDVVMDGITSPIKADPEWAKTTVNGMPALRETDTFDTFMESSWYYARYTCPQYQEGMLDSKAANYWLPVDIYIGGIEHAIMHLLYFRFFHKLMRDAGMVTSDEPAKQLLCQGMVLADAFYYVGENGERNWVSPVDAIVERDEKGRIVKAKDAAGHELVYTGMSKMSKSKNNGIDPQVMVERYGADTVRLFMMFASPADMTLEWQESGVEGANRFIKRVWKLVYEHTAKGPVAALNVDALSEDQKALRRDVHKTIAKVTDDIGRRQTFNTAIAAIMELMNKLAKAPQEGEQDRALLQEALQAVVRMLNPFTPHVCFTLWQELGGEGDIDNAPWPVADEQAMVENTTLVVVQVNGKVRGKITVPVDATEEQVRERAGQEHLVAKYLDGVTVRKVIYVPGKLLNLVVG.

The short motif at 42–52 is the 'HIGH' region element; sequence PYPSGRLHMGH. The 'KMSKS' region signature appears at 619-623; the sequence is KMSKS. Lysine 622 contributes to the ATP binding site.

Belongs to the class-I aminoacyl-tRNA synthetase family.

It is found in the cytoplasm. It catalyses the reaction tRNA(Leu) + L-leucine + ATP = L-leucyl-tRNA(Leu) + AMP + diphosphate. This is Leucine--tRNA ligase from Salmonella typhimurium (strain LT2 / SGSC1412 / ATCC 700720).